A 353-amino-acid chain; its full sequence is MTAILERRESTSLWARFCEWITSTENRIYIGWFGVIMIPTLLTATSVFIIAFIAAPPVDIDGIREPVSGSLLYGNNIISGAVIPTSNAIGLHFYPIWEAASLDEWLYNGGPYQLIVCHFFIGICCYMGREWELSFRLGMRPWIAVAYSAPVAAATAVFIIYPIGQGSFSDGMPLGISGTFNFMIVFQAEHNILMHPFHMLGVAGVFGGSLFSAMHGSLVTSSLIRETTENESANAGYRFGQEEETYNIVAAHGYFGRLIFQYASFNNSRSLHFFLAAWPVIGIWFTALGLSTMAFNLNGLNFNQSVVDSNGRVLNTWADIINRANLGMEVMHERNAHNFPLDLAAFEAPSINA.

An N-acetylthreonine modification is found at T2. Residue T2 is modified to Phosphothreonine. 3 consecutive transmembrane segments (helical) span residues Y29 to S46, H118 to L133, and W142 to A156. Residue H118 participates in chlorophyll a binding. Residue Y126 participates in pheophytin a binding. The [CaMn4O5] cluster site is built by D170 and E189. The chain crosses the membrane as a helical span at residues F197–L218. H198 is a chlorophyll a binding site. Residues H215 and S264–F265 contribute to the a quinone site. Residue H215 participates in Fe cation binding. H272 lines the Fe cation pocket. The helical transmembrane segment at F274–L288 threads the bilayer. [CaMn4O5] cluster-binding residues include H332, E333, D342, and A344. Positions A345–A353 are excised as a propeptide.

Belongs to the reaction center PufL/M/PsbA/D family. As to quaternary structure, PSII is composed of 1 copy each of membrane proteins PsbA, PsbB, PsbC, PsbD, PsbE, PsbF, PsbH, PsbI, PsbJ, PsbK, PsbL, PsbM, PsbT, PsbX, PsbY, PsbZ, Psb30/Ycf12, at least 3 peripheral proteins of the oxygen-evolving complex and a large number of cofactors. It forms dimeric complexes. It depends on The D1/D2 heterodimer binds P680, chlorophylls that are the primary electron donor of PSII, and subsequent electron acceptors. It shares a non-heme iron and each subunit binds pheophytin, quinone, additional chlorophylls, carotenoids and lipids. D1 provides most of the ligands for the Mn4-Ca-O5 cluster of the oxygen-evolving complex (OEC). There is also a Cl(-1) ion associated with D1 and D2, which is required for oxygen evolution. The PSII complex binds additional chlorophylls, carotenoids and specific lipids. as a cofactor. In terms of processing, tyr-161 forms a radical intermediate that is referred to as redox-active TyrZ, YZ or Y-Z. Post-translationally, C-terminally processed by CTPA; processing is essential to allow assembly of the oxygen-evolving complex and thus photosynthetic growth.

The protein resides in the plastid. Its subcellular location is the chloroplast thylakoid membrane. It catalyses the reaction 2 a plastoquinone + 4 hnu + 2 H2O = 2 a plastoquinol + O2. In terms of biological role, photosystem II (PSII) is a light-driven water:plastoquinone oxidoreductase that uses light energy to abstract electrons from H(2)O, generating O(2) and a proton gradient subsequently used for ATP formation. It consists of a core antenna complex that captures photons, and an electron transfer chain that converts photonic excitation into a charge separation. The D1/D2 (PsbA/PsbD) reaction center heterodimer binds P680, the primary electron donor of PSII as well as several subsequent electron acceptors. In Chlamydomonas moewusii (Chlamydomonas eugametos), this protein is Photosystem II protein D1.